We begin with the raw amino-acid sequence, 133 residues long: Small ribosomal subunit protein uS8 (133 aa).

This sequence belongs to the universal ribosomal protein uS8 family. In terms of assembly, part of the 30S ribosomal subunit. Contacts proteins S5 and S12.

Its function is as follows. One of the primary rRNA binding proteins, it binds directly to 16S rRNA central domain where it helps coordinate assembly of the platform of the 30S subunit. The chain is Small ribosomal subunit protein uS8 from Orientia tsutsugamushi (strain Ikeda) (Rickettsia tsutsugamushi).